Here is a 347-residue protein sequence, read N- to C-terminus: Protein-glutamate methylesterase/protein-glutamine glutaminase (347 aa).

The region spanning arginine 6–lysine 123 is the Response regulatory domain. Residue aspartate 57 is modified to 4-aspartylphosphate. In terms of domain architecture, CheB-type methylesterase spans phenylalanine 150 to arginine 342. Catalysis depends on residues serine 162, histidine 188, and aspartate 284.

The protein belongs to the CheB family. Phosphorylated by CheA. Phosphorylation of the N-terminal regulatory domain activates the methylesterase activity.

It is found in the cytoplasm. The enzyme catalyses [protein]-L-glutamate 5-O-methyl ester + H2O = L-glutamyl-[protein] + methanol + H(+). It carries out the reaction L-glutaminyl-[protein] + H2O = L-glutamyl-[protein] + NH4(+). Functionally, involved in chemotaxis. Part of a chemotaxis signal transduction system that modulates chemotaxis in response to various stimuli. Catalyzes the demethylation of specific methylglutamate residues introduced into the chemoreceptors (methyl-accepting chemotaxis proteins or MCP) by CheR. Also mediates the irreversible deamidation of specific glutamine residues to glutamic acid. The protein is Protein-glutamate methylesterase/protein-glutamine glutaminase of Rhizobium etli (strain ATCC 51251 / DSM 11541 / JCM 21823 / NBRC 15573 / CFN 42).